We begin with the raw amino-acid sequence, 149 residues long: MKNLISFFDRSKGKWISQRTTYELSNKNMSSVQSQMTMKIGNSLSGSIILASLNWGDIYRQVAHYAKNHSRSEYDNKFNLQFGNQLNNHKLLTLCIVTDPSLISFKTRYGSTTIDETYWFATNNLRLSTSIVKRFNTCVAVSFCSEIKV.

Belongs to the CpcS/CpeS biliprotein lyase family.

It is found in the plastid. Its subcellular location is the chloroplast. Might function to covalently attach a chromophore to Cys residue(s) of phycobiliproteins. This is Chromophore lyase CpcS/CpeS homolog from Pyropia yezoensis (Susabi-nori).